The sequence spans 294 residues: N-acetylmuramic acid 6-phosphate etherase (294 aa).

In terms of domain architecture, SIS spans 54-217 (VIQSFEEEGR…STASMIGVGK (164 aa)). Residue E82 is the Proton donor of the active site. Residue E113 is part of the active site.

Belongs to the GCKR-like family. MurNAc-6-P etherase subfamily. As to quaternary structure, homodimer.

The catalysed reaction is N-acetyl-D-muramate 6-phosphate + H2O = N-acetyl-D-glucosamine 6-phosphate + (R)-lactate. Its pathway is amino-sugar metabolism; N-acetylmuramate degradation. In terms of biological role, specifically catalyzes the cleavage of the D-lactyl ether substituent of MurNAc 6-phosphate, producing GlcNAc 6-phosphate and D-lactate. The sequence is that of N-acetylmuramic acid 6-phosphate etherase from Bacillus thuringiensis subsp. konkukian (strain 97-27).